Here is a 135-residue protein sequence, read N- to C-terminus: Putative hydrolase EbsB (135 aa).

Residues methionine 1–glutamine 128 enclose the RNase H type-1 domain. 4 residues coordinate Mg(2+): aspartate 7, glutamate 45, aspartate 71, and aspartate 120.

The protein belongs to the RNase H family. EbsB subfamily. Mg(2+) is required as a cofactor.

It localises to the secreted. The protein resides in the cell wall. Seems to play some role in the cell surface expression of a chromosomally encoded receptor, named enterococcal binding substance (EBS), that mediates mating aggregate formation. Might interfere with the synthesis or assembly of EBS and function as a cell wall hydrolase. The protein is Putative hydrolase EbsB of Enterococcus faecalis (strain ATCC 700802 / V583).